We begin with the raw amino-acid sequence, 662 residues long: 72 kDa type IV collagenase (662 aa).

The signal sequence occupies residues 1–29 (MEARLVWGVLVGPLRVLCVLCCLLGHAIA). Residues 30–109 (APSPIIKFPG…PRCGNPDVAN (80 aa)) constitute a propeptide, activation peptide. Residues 100–107 (PRCGNPDV) carry the Cysteine switch motif. Cysteine 102 is a binding site for Zn(2+). Positions 110-221 (YNFFPRKPKW…LWTLGEGQVV (112 aa)) are collagenase-like 1. Residues aspartate 134 and aspartate 168 each contribute to the Ca(2+) site. Zn(2+)-binding residues include histidine 178 and aspartate 180. Positions 185 and 186 each coordinate Ca(2+). Residue histidine 193 participates in Zn(2+) binding. The Ca(2+) site is built by glycine 200, glycine 202, and aspartate 204. Histidine 206 provides a ligand contact to Zn(2+). Residues aspartate 208, aspartate 209, and glutamate 211 each contribute to the Ca(2+) site. The collagen-binding stretch occupies residues 222–396 (RVKYGNADGE…WGFCPDQGYS (175 aa)). 3 Fibronectin type-II domains span residues 228 to 276 (ADGE…FCPH), 286 to 334 (GDGQ…FCPE), and 344 to 392 (SEGA…FCPD). Disulfide bonds link cysteine 233-cysteine 259, cysteine 247-cysteine 274, cysteine 291-cysteine 317, cysteine 305-cysteine 332, cysteine 349-cysteine 375, and cysteine 363-cysteine 390. The segment at 397 to 467 (LFLVAAHEFG…GPTPTLGPVT (71 aa)) is collagenase-like 2. Residue histidine 403 coordinates Zn(2+). Glutamate 404 is an active-site residue. Histidine 407 and histidine 413 together coordinate Zn(2+). Positions 414 to 662 (SQDPGALMAP…GSIKSDWLGC (249 aa)) are required for inhibitor TIMP2 binding. A disulfide bridge connects residues cysteine 471 and cysteine 662. Hemopexin repeat units lie at residues 474-518 (DIVF…WPEL), 519-565 (PEKI…GLPP), 567-615 (VQQV…WNAI), and 616-662 (PDNL…WLGC). Ca(2+) contacts are provided by aspartate 478, aspartate 523, and aspartate 571. Asparagine 575 carries an N-linked (GlcNAc...) asparagine glycan. Residue aspartate 620 coordinates Ca(2+). N-linked (GlcNAc...) asparagine glycosylation occurs at asparagine 644.

Belongs to the peptidase M10A family. In terms of assembly, interacts (via the C-terminal hemopexin-like domains-containing region) with the integrin alpha-V/beta-3; the interaction promotes vascular invasion in angiogenic vessels and melamoma cells. Interacts (via the C-terminal PEX domain) with TIMP2 (via the C-terminal); the interaction inhibits the degradation activity. Interacts with GSK3B. Requires Ca(2+) as cofactor. The cofactor is Zn(2+). Phosphorylation on multiple sites modulates enzymatic activity. Phosphorylated by PKC in vitro. Post-translationally, the propeptide is processed by MMP14 (MT-MMP1) and MMP16 (MT-MMP3). Autocatalytic cleavage in the C-terminal produces the anti-angiogenic peptide, PEX. This processing appears to be facilitated by binding integrin integrinv/beta3.

The protein localises to the secreted. It localises to the extracellular space. It is found in the extracellular matrix. The protein resides in the membrane. Its subcellular location is the nucleus. It carries out the reaction Cleavage of gelatin type I and collagen types IV, V, VII, X. Cleaves the collagen-like sequence Pro-Gln-Gly-|-Ile-Ala-Gly-Gln.. Ubiquitinous metalloproteinase that is involved in diverse functions such as remodeling of the vasculature, angiogenesis, tissue repair, tumor invasion, inflammation, and atherosclerotic plaque rupture. As well as degrading extracellular matrix proteins, can also act on several nonmatrix proteins such as big endothelial 1 and beta-type CGRP promoting vasoconstriction. Also cleaves KISS at a Gly-|-Leu bond. Appears to have a role in myocardial cell death pathways. Contributes to myocardial oxidative stress by regulating the activity of GSK3beta. Cleaves GSK3beta in vitro. Involved in the formation of the fibrovascular tissues. In terms of biological role, PEX, the C-terminal non-catalytic fragment of MMP2, possesses anti-angiogenic and anti-tumor properties and inhibits cell migration and cell adhesion to FGF2 and vitronectin. Ligand for integrin alpha-v/beta3 on the surface of blood vessels. This is 72 kDa type IV collagenase (Mmp2) from Rattus norvegicus (Rat).